Here is a 346-residue protein sequence, read N- to C-terminus: Probable dual-specificity RNA methyltransferase RlmN (346 aa).

The Proton acceptor role is filled by E91. Residues 97–325 (TEKRLTVCVS…VSVRYSKGLE (229 aa)) enclose the Radical SAM core domain. An intrachain disulfide couples C104 to C330. C111, C115, and C118 together coordinate [4Fe-4S] cluster. S-adenosyl-L-methionine contacts are provided by residues 158 to 159 (GE), S188, 211 to 213 (SLH), and N287. C330 acts as the S-methylcysteine intermediate in catalysis.

It belongs to the radical SAM superfamily. RlmN family. It depends on [4Fe-4S] cluster as a cofactor.

The protein localises to the cytoplasm. It carries out the reaction adenosine(2503) in 23S rRNA + 2 reduced [2Fe-2S]-[ferredoxin] + 2 S-adenosyl-L-methionine = 2-methyladenosine(2503) in 23S rRNA + 5'-deoxyadenosine + L-methionine + 2 oxidized [2Fe-2S]-[ferredoxin] + S-adenosyl-L-homocysteine. The enzyme catalyses adenosine(37) in tRNA + 2 reduced [2Fe-2S]-[ferredoxin] + 2 S-adenosyl-L-methionine = 2-methyladenosine(37) in tRNA + 5'-deoxyadenosine + L-methionine + 2 oxidized [2Fe-2S]-[ferredoxin] + S-adenosyl-L-homocysteine. Functionally, specifically methylates position 2 of adenine 2503 in 23S rRNA and position 2 of adenine 37 in tRNAs. The polypeptide is Probable dual-specificity RNA methyltransferase RlmN (Picosynechococcus sp. (strain ATCC 27264 / PCC 7002 / PR-6) (Agmenellum quadruplicatum)).